Consider the following 502-residue polypeptide: Probable cytosol aminopeptidase (502 aa).

2 residues coordinate Mn(2+): K265 and D270. K277 is a catalytic residue. D288, D347, and E349 together coordinate Mn(2+). R351 is a catalytic residue.

It belongs to the peptidase M17 family. Mn(2+) is required as a cofactor.

It localises to the cytoplasm. The enzyme catalyses Release of an N-terminal amino acid, Xaa-|-Yaa-, in which Xaa is preferably Leu, but may be other amino acids including Pro although not Arg or Lys, and Yaa may be Pro. Amino acid amides and methyl esters are also readily hydrolyzed, but rates on arylamides are exceedingly low.. It carries out the reaction Release of an N-terminal amino acid, preferentially leucine, but not glutamic or aspartic acids.. In terms of biological role, presumably involved in the processing and regular turnover of intracellular proteins. Catalyzes the removal of unsubstituted N-terminal amino acids from various peptides. The sequence is that of Probable cytosol aminopeptidase from Rickettsia bellii (strain OSU 85-389).